Reading from the N-terminus, the 433-residue chain is GTPase Obg (433 aa).

In terms of domain architecture, Obg spans 1 to 159 (MAFRDVLDIE…RRVRLELRLI (159 aa)). The 168-residue stretch at 160 to 327 (ADVGLVGYPN…LRQALFDLLP (168 aa)) folds into the OBG-type G domain. ATP-binding positions include 166–173 (GYPNAGKS), 191–195 (FTTLS), 214–217 (DIPG), 280–283 (NKIE), and 308–310 (SAK). Mg(2+)-binding residues include Ser173 and Thr193. One can recognise an OCT domain in the interval 342 to 430 (PEEVREEPLT…IGSFRFEYYA (89 aa)).

This sequence belongs to the TRAFAC class OBG-HflX-like GTPase superfamily. OBG GTPase family. Monomer. Requires Mg(2+) as cofactor.

Its subcellular location is the cytoplasm. Functionally, an essential GTPase which binds GTP, GDP and possibly (p)ppGpp with moderate affinity, with high nucleotide exchange rates and a fairly low GTP hydrolysis rate. Plays a role in control of the cell cycle, stress response, ribosome biogenesis and in those bacteria that undergo differentiation, in morphogenesis control. The polypeptide is GTPase Obg (Deinococcus geothermalis (strain DSM 11300 / CIP 105573 / AG-3a)).